We begin with the raw amino-acid sequence, 557 residues long: Protein NRT1/ PTR FAMILY 5.10 (557 aa).

2 helical membrane-spanning segments follow: residues 49–67 and 79–99; these read FAYYGISSNLITYLTGPLG and AWSGTASLLPLLGAFVADSFL. At T104 the chain carries Phosphothreonine. 10 consecutive transmembrane segments (helical) span residues 105–125, 144–164, 186–206, 215–235, 320–340, 365–385, 401–421, 443–463, 479–499, and 526–546; these read ILAASALYIVGLGVLTLSAMI, VITFFSALYLVALAQGGHKPC, SFFNWWYFGMCFGTLTTLWVL, WALGFGIPCIAMVVALVVLLL, APIWLTCLVYAVVFAQSPTFF, FISLSIVIFIPIYDRVLIPIA, IGTGIFLSFLAMVVAALVEMK, VWWLVPQYVLFGITDVFAMVG, VGLALYLSIFGIGNFLSSFMI, and YFYWLLACLSFIGLASYLYVA.

This sequence belongs to the major facilitator superfamily. Proton-dependent oligopeptide transporter (POT/PTR) (TC 2.A.17) family. Expressed in shoots, roots and stems. Detected in leaves, flowers and siliques.

Its subcellular location is the membrane. The protein is Protein NRT1/ PTR FAMILY 5.10 (NPF5.10) of Arabidopsis thaliana (Mouse-ear cress).